The primary structure comprises 355 residues: Serine endoprotease DegS (355 aa).

At 1 to 4 the chain is on the cytoplasmic side; that stretch reads MFVK. A helical transmembrane segment spans residues 5–27; that stretch reads LLRSVAIGLIVGAILLVAMPSLR. Topologically, residues 28–355 are periplasmic; the sequence is SLNPLSTPQF…VTIQEYPATN (328 aa). Catalysis depends on charge relay system residues His96 and Asp126. Position 184 (Thr184) interacts with substrate. Ser201 acts as the Charge relay system in catalysis. 259 to 264 serves as a coordination point for substrate; sequence IGIGGR. One can recognise a PDZ domain in the interval 281-326; that stretch reads GIVVNEVSPDGPAANAGIQVNDLIISVDNKPAISALETMDQVAEIR. Tyr351 provides a ligand contact to substrate.

The protein belongs to the peptidase S1C family. In terms of assembly, homotrimer.

The protein resides in the cell inner membrane. The catalysed reaction is Acts on substrates that are at least partially unfolded. The cleavage site P1 residue is normally between a pair of hydrophobic residues, such as Val-|-Val.. Allosterically activated by the C-terminus of exposed OMP peptides (consensus Tyr-X-Phe-COOH); cleavage only occurs in the presence of peptides. Inhibited when RseB is bound to RseA. Its function is as follows. A site-1 protease (S1P) that cleaves the peptide bond between 'Val-148' and 'Ser-149' in RseA. Part of a regulated intramembrane proteolysis (RIP) cascade. When heat shock or other environmental stresses disrupt protein folding in the periplasm, DegS senses the accumulation of unassembled outer membrane porins (OMP) and then initiates RseA (anti sigma-E factor) degradation by cleaving its periplasmic domain, making it a substrate for subsequent cleavage by RseP. This cascade ultimately leads to the sigma-E-driven expression of a variety of factors dealing with folding stress in the periplasm and OMP assembly. Required for basal and stress-induced degradation of RseA. This chain is Serine endoprotease DegS (degS), found in Escherichia coli O157:H7.